A 139-amino-acid polypeptide reads, in one-letter code: Large ribosomal subunit protein uL14A (139 aa).

The protein belongs to the universal ribosomal protein uL14 family. As to quaternary structure, component of the large ribosomal subunit (LSU). Mature yeast ribosomes consist of a small (40S) and a large (60S) subunit. The 40S small subunit contains 1 molecule of ribosomal RNA (18S rRNA) and at least 33 different proteins. The large 60S subunit contains 3 rRNA molecules (25S, 5.8S and 5S rRNA) and at least 46 different proteins.

It is found in the cytoplasm. The protein localises to the nucleus. Its function is as follows. Component of the ribosome, a large ribonucleoprotein complex responsible for the synthesis of proteins in the cell. The small ribosomal subunit (SSU) binds messenger RNAs (mRNAs) and translates the encoded message by selecting cognate aminoacyl-transfer RNA (tRNA) molecules. The large subunit (LSU) contains the ribosomal catalytic site termed the peptidyl transferase center (PTC), which catalyzes the formation of peptide bonds, thereby polymerizing the amino acids delivered by tRNAs into a polypeptide chain. The nascent polypeptides leave the ribosome through a tunnel in the LSU and interact with protein factors that function in enzymatic processing, targeting, and the membrane insertion of nascent chains at the exit of the ribosomal tunnel. The protein is Large ribosomal subunit protein uL14A (rpl2301) of Schizosaccharomyces pombe (strain 972 / ATCC 24843) (Fission yeast).